A 66-amino-acid polypeptide reads, in one-letter code: KEGYLVNSYTGCKFECFKLGDNDYCKRECKQQYGKSSGGYCYAFGCWCTHLYEQAVVWPLPNKTCN.

Positions 1-66 (KEGYLVNSYT…VWPLPNKTCN (66 aa)) constitute an LCN-type CS-alpha/beta domain. Cystine bridges form between C12–C65, C16–C41, C25–C46, and C29–C48. At N66 the chain carries Asparagine amide.

It belongs to the long (4 C-C) scorpion toxin superfamily. Sodium channel inhibitor family. Beta subfamily. As to expression, expressed by the venom gland.

The protein localises to the secreted. Its function is as follows. Beta toxins bind voltage-independently at site-4 of sodium channels (Nav) and shift the voltage of activation toward more negative potentials thereby affecting sodium channel activation and promoting spontaneous and repetitive firing. In Centruroides suffusus (Durango bark scorpion), this protein is Beta-toxin Css6.